Consider the following 206-residue polypeptide: Large ribosomal subunit protein eL13 (206 aa).

Basic and acidic residues predominate over residues 184–193 (EKTNQKWDGK). The interval 184–206 (EKTNQKWDGKRKAKAQAAAEPKA) is disordered.

This sequence belongs to the eukaryotic ribosomal protein eL13 family.

The chain is Large ribosomal subunit protein eL13 (RPL13) from Tetrahymena thermophila (strain SB210).